The following is a 235-amino-acid chain: 7-cyano-7-deazaguanine synthase (235 aa).

16-26 is an ATP binding site; the sequence is FSGGQDSTTCL. Zn(2+) is bound by residues cysteine 193, cysteine 201, cysteine 204, and cysteine 207.

Belongs to the QueC family. The cofactor is Zn(2+).

The catalysed reaction is 7-carboxy-7-deazaguanine + NH4(+) + ATP = 7-cyano-7-deazaguanine + ADP + phosphate + H2O + H(+). It functions in the pathway purine metabolism; 7-cyano-7-deazaguanine biosynthesis. In terms of biological role, catalyzes the ATP-dependent conversion of 7-carboxy-7-deazaguanine (CDG) to 7-cyano-7-deazaguanine (preQ(0)). The sequence is that of 7-cyano-7-deazaguanine synthase from Actinobacillus succinogenes (strain ATCC 55618 / DSM 22257 / CCUG 43843 / 130Z).